The primary structure comprises 216 residues: LexA repressor 1 (216 aa).

Positions 38–58 (TRQIGAAVGLRSMSSVARHLR) form a DNA-binding region, H-T-H motif. Residues Ser140 and Lys177 each act as for autocatalytic cleavage activity in the active site.

Belongs to the peptidase S24 family. Homodimer.

The catalysed reaction is Hydrolysis of Ala-|-Gly bond in repressor LexA.. Functionally, represses a number of genes involved in the response to DNA damage (SOS response), including recA and lexA. In the presence of single-stranded DNA, RecA interacts with LexA causing an autocatalytic cleavage which disrupts the DNA-binding part of LexA, leading to derepression of the SOS regulon and eventually DNA repair. In Nocardia farcinica (strain IFM 10152), this protein is LexA repressor 1.